An 89-amino-acid polypeptide reads, in one-letter code: Small ribosomal subunit protein uS15 (89 aa).

The protein belongs to the universal ribosomal protein uS15 family. Part of the 30S ribosomal subunit. Forms a bridge to the 50S subunit in the 70S ribosome, contacting the 23S rRNA.

Functionally, one of the primary rRNA binding proteins, it binds directly to 16S rRNA where it helps nucleate assembly of the platform of the 30S subunit by binding and bridging several RNA helices of the 16S rRNA. Forms an intersubunit bridge (bridge B4) with the 23S rRNA of the 50S subunit in the ribosome. The polypeptide is Small ribosomal subunit protein uS15 (Oceanobacillus iheyensis (strain DSM 14371 / CIP 107618 / JCM 11309 / KCTC 3954 / HTE831)).